Consider the following 397-residue polypeptide: Ribosomal RNA large subunit methyltransferase I (397 aa).

Positions 2–79 (TAAIYLVKGR…KEEINKAFFV (78 aa)) constitute a PUA domain.

This sequence belongs to the methyltransferase superfamily. RlmI family.

The protein localises to the cytoplasm. The enzyme catalyses cytidine(1962) in 23S rRNA + S-adenosyl-L-methionine = 5-methylcytidine(1962) in 23S rRNA + S-adenosyl-L-homocysteine + H(+). Functionally, specifically methylates the cytosine at position 1962 (m5C1962) of 23S rRNA. This is Ribosomal RNA large subunit methyltransferase I from Vibrio campbellii (strain ATCC BAA-1116).